Consider the following 481-residue polypeptide: Glutamyl-tRNA(Gln) amidotransferase subunit A (481 aa).

Residues Lys74 and Ser149 each act as charge relay system in the active site. Residue Ser173 is the Acyl-ester intermediate of the active site.

Belongs to the amidase family. GatA subfamily. As to quaternary structure, heterotrimer of A, B and C subunits.

The enzyme catalyses L-glutamyl-tRNA(Gln) + L-glutamine + ATP + H2O = L-glutaminyl-tRNA(Gln) + L-glutamate + ADP + phosphate + H(+). Its function is as follows. Allows the formation of correctly charged Gln-tRNA(Gln) through the transamidation of misacylated Glu-tRNA(Gln) in organisms which lack glutaminyl-tRNA synthetase. The reaction takes place in the presence of glutamine and ATP through an activated gamma-phospho-Glu-tRNA(Gln). This chain is Glutamyl-tRNA(Gln) amidotransferase subunit A, found in Francisella tularensis subsp. holarctica (strain FTNF002-00 / FTA).